Reading from the N-terminus, the 350-residue chain is Tetraacyldisaccharide 4'-kinase (350 aa).

49–56 (TTGGTGKT) provides a ligand contact to ATP.

Belongs to the LpxK family.

The enzyme catalyses a lipid A disaccharide + ATP = a lipid IVA + ADP + H(+). The protein operates within glycolipid biosynthesis; lipid IV(A) biosynthesis; lipid IV(A) from (3R)-3-hydroxytetradecanoyl-[acyl-carrier-protein] and UDP-N-acetyl-alpha-D-glucosamine: step 6/6. Its function is as follows. Transfers the gamma-phosphate of ATP to the 4'-position of a tetraacyldisaccharide 1-phosphate intermediate (termed DS-1-P) to form tetraacyldisaccharide 1,4'-bis-phosphate (lipid IVA). The chain is Tetraacyldisaccharide 4'-kinase from Chlorobaculum tepidum (strain ATCC 49652 / DSM 12025 / NBRC 103806 / TLS) (Chlorobium tepidum).